A 204-amino-acid polypeptide reads, in one-letter code: Somatotropin (204 aa).

A signal peptide spans 1-17; it reads MNSVVLQLSVVCLGVSS. Position 18 is a pyrrolidone carboxylic acid (Gln18). Position 36 (His36) interacts with Zn(2+). A disulfide bond links Cys69 and Cys177. Glu186 lines the Zn(2+) pocket. Cys194 and Cys202 are joined by a disulfide.

Belongs to the somatotropin/prolactin family.

The protein localises to the secreted. In terms of biological role, growth hormone plays an important role in growth control and involved in the regulation of several anabolic processes. In Oreochromis mossambicus (Mozambique tilapia), this protein is Somatotropin (gh).